Here is a 276-residue protein sequence, read N- to C-terminus: Putative ABC transporter ATP-binding protein MA_4021 (276 aa).

The region spanning 5-247 is the ABC transporter domain; that stretch reads FDLKNISYSY…DLNLLLSTNL (243 aa). 38–45 lines the ATP pocket; it reads GSNGSGKS.

This sequence belongs to the ABC transporter superfamily.

The protein localises to the cell membrane. Functionally, probably part of an ABC transporter complex. Responsible for energy coupling to the transport system. In Methanosarcina acetivorans (strain ATCC 35395 / DSM 2834 / JCM 12185 / C2A), this protein is Putative ABC transporter ATP-binding protein MA_4021.